The chain runs to 181 residues: Photosystem I assembly protein Ycf4 (181 aa).

A run of 2 helical transmembrane segments spans residues 19–41 (YFWAVFLCSGGISFLLAGISSYF) and 61–83 (LVMSFYGTLSIALAIYILGTLFW).

It belongs to the Ycf4 family.

Its subcellular location is the plastid. It localises to the chloroplast thylakoid membrane. Seems to be required for the assembly of the photosystem I complex. The chain is Photosystem I assembly protein Ycf4 from Trieres chinensis (Marine centric diatom).